The sequence spans 293 residues: Elongation factor Ts (293 aa).

The tract at residues 80–83 (TDFV) is involved in Mg(2+) ion dislocation from EF-Tu.

This sequence belongs to the EF-Ts family.

The protein resides in the cytoplasm. Functionally, associates with the EF-Tu.GDP complex and induces the exchange of GDP to GTP. It remains bound to the aminoacyl-tRNA.EF-Tu.GTP complex up to the GTP hydrolysis stage on the ribosome. The polypeptide is Elongation factor Ts (Paraburkholderia phytofirmans (strain DSM 17436 / LMG 22146 / PsJN) (Burkholderia phytofirmans)).